Reading from the N-terminus, the 281-residue chain is Undecaprenyl-diphosphatase (281 aa).

7 helical membrane passes run 49–69, 92–112, 116–136, 152–172, 196–216, 224–244, and 257–277; these read SANT…AWIF, LHIF…DDFI, LFSV…MIAA, MTYK…WPGF, TFIM…ASNI, ILFY…SIRL, and FAIY…GFGI.

Belongs to the UppP family.

Its subcellular location is the cell membrane. The enzyme catalyses di-trans,octa-cis-undecaprenyl diphosphate + H2O = di-trans,octa-cis-undecaprenyl phosphate + phosphate + H(+). In terms of biological role, catalyzes the dephosphorylation of undecaprenyl diphosphate (UPP). Confers resistance to bacitracin. The chain is Undecaprenyl-diphosphatase from Macrococcus caseolyticus (strain JCSC5402) (Macrococcoides caseolyticum).